The following is a 350-amino-acid chain: Small ribosomal subunit protein uS3 (350 aa).

Residues 38 to 106 (IRKMMSRGME…QVQLNILEVK (69 aa)) enclose the KH type-2 domain. The disordered stretch occupies residues 211 to 350 (AEREAQEALQ…TPGTPEKAEE (140 aa)). The span at 222-232 (QTRRDRPRRGP) shows a compositional bias: basic residues. Positions 261-350 (NAPAAETAAS…TPGTPEKAEE (90 aa)) are enriched in low complexity.

This sequence belongs to the universal ribosomal protein uS3 family. In terms of assembly, part of the 30S ribosomal subunit. Forms a tight complex with proteins S10 and S14.

Its function is as follows. Binds the lower part of the 30S subunit head. Binds mRNA in the 70S ribosome, positioning it for translation. The sequence is that of Small ribosomal subunit protein uS3 from Frankia alni (strain DSM 45986 / CECT 9034 / ACN14a).